A 587-amino-acid polypeptide reads, in one-letter code: Phosphatidylinositol-3-phosphatase SAC1 (587 aa).

Residues 1-520 (MAATTYERLK…SPLSVPRDLK (520 aa)) lie on the Cytoplasmic side of the membrane. An SAC domain is found at 122–451 (MNHVLSMDGF…ANACAKQYAG (330 aa)). Positions 452-587 (TGALKTDFTR…PRLVQKEKID (136 aa)) are essential for phosphatidylinositol-4-phosphate phosphatase activity. An N6-acetyllysine modification is found at K456. A helical transmembrane segment spans residues 521–541 (FLALPIIMVVAFSMCIICLLM). Topologically, residues 542-548 (AGDTWTE) are lumenal. Residues 549-569 (TLAYVLFWGVASIGTFFIILY) form a helical membrane-spanning segment. The Cytoplasmic portion of the chain corresponds to 570–587 (NGKDFVDAPRLVQKEKID).

Interacts with TMEM39A. Interacts with SEC23A and SEC24A; this interaction is reduced in the absence of TMEM39A. Interacts with PLEKHA3 and VAPA and/or VAPB to form a ternary complex.

It is found in the endoplasmic reticulum membrane. The protein localises to the golgi apparatus membrane. It catalyses the reaction a 1,2-diacyl-sn-glycero-3-phospho-(1D-myo-inositol-3-phosphate) + H2O = a 1,2-diacyl-sn-glycero-3-phospho-(1D-myo-inositol) + phosphate. The catalysed reaction is a 1,2-diacyl-sn-glycero-3-phospho-(1D-myo-inositol 4-phosphate) + H2O = a 1,2-diacyl-sn-glycero-3-phospho-(1D-myo-inositol) + phosphate. Functionally, phosphoinositide phosphatase which catalyzes the hydrolysis of phosphatidylinositol 4-phosphate (PtdIns(4)P), phosphatidylinositol 3-phosphate (PtdIns(3)P) and has low activity towards phosphatidylinositol-3,5-bisphosphate (PtdIns(3,5)P2). Shows a very robust PtdIns(4)P phosphatase activity when it binds PtdIns(4)P in a 'cis' configuration in the cellular environment, with much less activity seen when it binds PtdIns(4)P in 'trans' configuration. PtdIns(4)P phosphatase activity (when it binds PtdIns(4)P in 'trans' configuration) is enhanced in the presence of PLEKHA3. In Bos taurus (Bovine), this protein is Phosphatidylinositol-3-phosphatase SAC1 (SACM1L).